Reading from the N-terminus, the 891-residue chain is MQPEEPCAPSAPGGPDVPERGQRSRDPGPRLSGQLLPELYSFVARVLFYLAPVYLAGYLGLSVTWLLLGALLWMWWRRNRRGKLGRLEAAFEFLEHEREFISRELRGQHLPAWIHFPDVERVEWANKIIIQIWPYLSMIMENKIREKLEPKIREKSIHLRTFTFTKLYFGQKCPKVNGVKVHTDKRNRRKVTLDLQICYIGDCEISVELQKIRGGVSGVQLQGTLRVILEPLLVDKPFIGAVTVFFLQKPHLQINWTGLTNLLDMPGINELSDSLLEDLIAAHLVLPNRVTVPVKKGLDVTNLRVPLPCGVIRVHLLEAKKLAQKDNFLGLGGKSDPYAKVSIGLQHCRSRTIYKNLNPTWNEVFEFMVYEVPGQDLEVDLYDEDTDKDDFLGSLQICLGDVMKNRVVDEWFALNDTTSGRLHLRLEWLSLLTDQEALTENDSGLSTAILVVFLENACNLPRNPFDYLNGEYRAKKLSRFVKNKASRDPSSYVKLTVGKKTFTSKTCPHSKDPVWSQVFSFFVHSVAAEQLCLKVLDDELECALGVLEFPLCRILPCADLTLEQCFQLDHSGLDSLISMRLVLRFLRVEGRELGSPYTGPDALKKGPLFIKKVATNQGCKAPPLNEGLADVTSTSNPASYIKGASKSIDNISAATTDPEPMPEPQGPGPEPKGKDSARGLCESPGKKKNPATTFLTVPGLHSPGPIKSPRPMSRPAFPFAWPLTRVAPSMSSLNSLASSCFDLTDVSLNTEAGDSRQGRLGEIQLTVRYVCLRHCLRVLVNGCRNLTPCTSSGADPYVRIYLLPERRWASRKKTSVKQKTLEPLFDETFEFFVPMGEVQKRSLDVAVKNSRPLGSHRRKELGKVLIDLSKQDLIKGFSQWYELTADGQPRS.

The interval Met-1–Arg-30 is disordered. At Met-1 to Ser-32 the chain is on the cytoplasmic side. The span at Val-17–Gly-28 shows a compositional bias: basic and acidic residues. Residues Gly-33–Val-53 traverse the membrane as a helical segment. A topological domain (lumenal) is located at residue Tyr-54. The chain crosses the membrane as a helical span at residues Leu-55–Trp-75. Residues Trp-76–Ser-891 are Cytoplasmic-facing. In terms of domain architecture, SMP-LTD spans Asp-118–Lys-295. 2 consecutive C2 domains span residues Val-292 to Phe-412 and Ser-430 to His-570. Residues Lys-325, Asp-326, Asp-336, Asp-383, Glu-384, Asp-385, Asp-387, Asp-389, and Asp-390 each contribute to the Ca(2+) site. Residues Ser-652–Pro-711 are disordered. Positions Glu-659–Glu-670 are enriched in pro residues. Positions Arg-759–Tyr-881 constitute a C2 3 domain. Positions Arg-806–Lys-813 are required for phosphatidylinositol 4,5-bisphosphate-dependent location at the cell membrane.

Belongs to the extended synaptotagmin family.

The protein resides in the cell membrane. The protein localises to the endoplasmic reticulum membrane. Its function is as follows. Tethers the endoplasmic reticulum to the cell membrane and promotes the formation of appositions between the endoplasmic reticulum and the cell membrane. Binds glycerophospholipids in a barrel-like domain and may play a role in cellular lipid transport. The protein is Extended synaptotagmin-3 (Esyt3) of Mus musculus (Mouse).